A 582-amino-acid polypeptide reads, in one-letter code: 5-aminolevulinate synthase, erythroid-specific, mitochondrial (582 aa).

A mitochondrion-targeting transit peptide spans methionine 1 to serine 44. A succinyl-CoA-binding site is contributed by arginine 158. Positions 253 and 254 each coordinate pyridoxal 5'-phosphate. Residues serine 275 and lysine 294 each coordinate succinyl-CoA. The pyridoxal 5'-phosphate site is built by serine 327, histidine 355, and threonine 383. Lysine 386 is a catalytic residue. Lysine 386 carries the post-translational modification N6-(pyridoxal phosphate)lysine. Residues threonine 415 and threonine 416 each coordinate pyridoxal 5'-phosphate. Threonine 503 contacts succinyl-CoA.

This sequence belongs to the class-II pyridoxal-phosphate-dependent aminotransferase family. As to quaternary structure, homodimer. Requires pyridoxal 5'-phosphate as cofactor.

The protein localises to the mitochondrion inner membrane. It catalyses the reaction succinyl-CoA + glycine + H(+) = 5-aminolevulinate + CO2 + CoA. It participates in porphyrin-containing compound metabolism; protoporphyrin-IX biosynthesis; 5-aminolevulinate from glycine: step 1/1. Its function is as follows. Catalyzes the pyridoxal 5'-phosphate (PLP)-dependent condensation of succinyl-CoA and glycine to form aminolevulinic acid (ALA), with CoA and CO2 as by-products. Contributes significantly to heme formation during erythropoiesis. The protein is 5-aminolevulinate synthase, erythroid-specific, mitochondrial (ALAS2) of Delphinapterus leucas (Beluga whale).